The sequence spans 444 residues: N-succinylarginine dihydrolase (444 aa).

Substrate-binding positions include 19–28 (AGLSFGNVAS), asparagine 110, and 137–138 (HR). Residue glutamate 174 is part of the active site. Arginine 214 contacts substrate. Histidine 250 is an active-site residue. Positions 252 and 362 each coordinate substrate. The active-site Nucleophile is cysteine 368.

The protein belongs to the succinylarginine dihydrolase family. As to quaternary structure, homodimer.

The catalysed reaction is N(2)-succinyl-L-arginine + 2 H2O + 2 H(+) = N(2)-succinyl-L-ornithine + 2 NH4(+) + CO2. Its pathway is amino-acid degradation; L-arginine degradation via AST pathway; L-glutamate and succinate from L-arginine: step 2/5. In terms of biological role, catalyzes the hydrolysis of N(2)-succinylarginine into N(2)-succinylornithine, ammonia and CO(2). In Shewanella amazonensis (strain ATCC BAA-1098 / SB2B), this protein is N-succinylarginine dihydrolase.